The chain runs to 201 residues: UPF0301 protein CE2927 (201 aa).

It belongs to the UPF0301 (AlgH) family.

In Corynebacterium efficiens (strain DSM 44549 / YS-314 / AJ 12310 / JCM 11189 / NBRC 100395), this protein is UPF0301 protein CE2927.